We begin with the raw amino-acid sequence, 864 residues long: Leucine--tRNA ligase (864 aa).

Residues 42 to 52 carry the 'HIGH' region motif; the sequence is PYPSGKLHMGH. Residues 622-626 carry the 'KMSKS' region motif; that stretch reads KMSKS. Lys-625 contacts ATP.

This sequence belongs to the class-I aminoacyl-tRNA synthetase family.

The protein resides in the cytoplasm. It catalyses the reaction tRNA(Leu) + L-leucine + ATP = L-leucyl-tRNA(Leu) + AMP + diphosphate. This is Leucine--tRNA ligase from Cellvibrio japonicus (strain Ueda107) (Pseudomonas fluorescens subsp. cellulosa).